We begin with the raw amino-acid sequence, 573 residues long: Pentatricopeptide repeat-containing protein At3g62890 (573 aa).

10 PPR repeats span residues 23–60, 61–95, 96–126, 127–161, 162–188, 198–232, 233–263, 265–295, 301–336, and 337–367; these read ESFLWNIIIRAIVHNVSSPQRHSPISVYLRMRNHRVSP, DFHTFPFLLPSFHNPLHLPLGQRTHAQILLFGLDK, DPFVRTSLLNMYSSCGDLRSAQRVFDDSGSK, DLPAWNSVVNAYAKAGLIDDARKLFDEMPERNVIS, WSCLINGYVMCGKYKEALDLFREMQLP, NEFTMSTVLSACGRLGALEQGKWVHAYIDKYHVEI, DIVLGTALIDMYAKCGSLERAKRVFNALGSK, DVKAYSAMICCLAMYGLTDECFQLFSEMTTS, NSVTFVGILGACVHRGLINEGKSYFKMMIEEFGITP, and SIQHYGCMVDLYGRSGLIKEAESFIASMPME. The type E motif; degenerate stretch occupies residues 372 to 447; that stretch reads IWGSLLSGSR…VPGCSYVEVE (76 aa). Positions 448 to 478 are type E(+) motif; sequence GVVHEFVVGDESQQESERIYAMLDEIMQRLR. Residues 479–573 form a type DYW motif region; sequence EAGYVTDTKE…DGSCSCRDFW (95 aa).

It belongs to the PPR family. PCMP-H subfamily.

This Arabidopsis thaliana (Mouse-ear cress) protein is Pentatricopeptide repeat-containing protein At3g62890 (PCMP-H82).